The sequence spans 2027 residues: Mediator of RNA polymerase II transcription subunit 12 (2027 aa).

The residue at position 13 (Tyr-13) is a Phosphotyrosine. 4 disordered regions span residues 170-191 (QSTSTLPTTPAPQPPTSSTPST), 474-516 (GAPG…MDID), 538-563 (MPCEGKGSPSPEKPDVEKEVKPPPKE), and 1088-1113 (TVTGGTEELPEEEGGGGSGGRRQGGR). A phosphoserine mark is found at Ser-482, Ser-512, Ser-545, and Ser-547. Residues 549-563 (EKPDVEKEVKPPPKE) are compositionally biased toward basic and acidic residues. 2 positions are modified to phosphoserine: Ser-1105 and Ser-1116. The segment covering 1241–1258 (AETGSSSGSTASNMPSSS) has biased composition (low complexity). Disordered regions lie at residues 1241–1262 (AETGSSSGSTASNMPSSSKTKP), 1297–1321 (ELEKGQHLGSSSRKERDRQKQKSMS), and 1585–1676 (YLEP…PGSI). 2 stretches are compositionally biased toward basic and acidic residues: residues 1297–1316 (ELEKGQHLGSSSRKERDRQK) and 1605–1618 (EPEKKAPEPPKTDK). Positions 1463–1901 (LAKKLQKELG…VRSTAILPEQ (439 aa)) are interaction with CTNNB1 and GLI3. Residues 1631 to 1640 (KKSTKGKKRS) show a composition bias toward basic residues. Lys-1645 carries the N6-acetyllysine modification. Arg-1746 carries the asymmetric dimethylarginine; alternate modification. At Arg-1746 the chain carries Omega-N-methylarginine; alternate. At Arg-1757 the chain carries Omega-N-methylarginine. Residues 1805–1848 (QHTGPAGTMVPPSYSSQPYQSTHPSTNPTLVDPTRHLQQRPSGY) form a disordered region. Residues 1815–1830 (PPSYSSQPYQSTHPST) show a composition bias toward low complexity. Arg-1844 and Arg-1865 each carry asymmetric dimethylarginine. Composition is skewed to low complexity over residues 1965–1975 (QHQQQQQQQAA), 1983–1999 (SQPQFQRQGLQQTQQQQ), and 2008–2021 (LQQQLSNTQPQPST). Disordered stretches follow at residues 1965–1999 (QHQQQQQQQAAPPQPQPQSQPQFQRQGLQQTQQQQ) and 2008–2027 (LQQQLSNTQPQPSTNIFGRY).

It belongs to the Mediator complex subunit 12 family. Component of the Mediator complex, which is composed of MED1, MED4, MED6, MED7, MED8, MED9, MED10, MED11, MED12, MED13, MED13L, MED14, MED15, MED16, MED17, MED18, MED19, MED20, MED21, MED22, MED23, MED24, MED25, MED26, MED27, MED29, MED30, MED31, CCNC, CDK8 and CDC2L6/CDK11. The MED12, MED13, CCNC and CDK8 subunits form a distinct module termed the CDK8 module. Mediator containing the CDK8 module is less active than Mediator lacking this module in supporting transcriptional activation. Individual preparations of the Mediator complex lacking one or more distinct subunits have been variously termed ARC, CRSP, DRIP, PC2, SMCC and TRAP. Also interacts with CTNNB1 and GLI3.

It is found in the nucleus. Its function is as follows. Component of the Mediator complex, a coactivator involved in the regulated transcription of nearly all RNA polymerase II-dependent genes. Mediator functions as a bridge to convey information from gene-specific regulatory proteins to the basal RNA polymerase II transcription machinery. Mediator is recruited to promoters by direct interactions with regulatory proteins and serves as a scaffold for the assembly of a functional preinitiation complex with RNA polymerase II and the general transcription factors. This subunit may specifically regulate transcription of targets of the Wnt signaling pathway and SHH signaling pathway. This Pan troglodytes (Chimpanzee) protein is Mediator of RNA polymerase II transcription subunit 12 (MED12).